The sequence spans 101 residues: Small ribosomal subunit protein uS10 (101 aa).

Belongs to the universal ribosomal protein uS10 family. In terms of assembly, part of the 30S ribosomal subunit.

Its function is as follows. Involved in the binding of tRNA to the ribosomes. The chain is Small ribosomal subunit protein uS10 from Corynebacterium jeikeium (strain K411).